A 194-amino-acid polypeptide reads, in one-letter code: MTDTWLIVGLGNPGTEYSNNRHNVGQMVLDELARRVGGSFKVHKARAHVLEGRLGIGGPRVVLAKPMSYMNVSGGPVSALSKFYDIDPEHVVAVHDEIDIPFNTVKLKIGGGEGGHNGLRDISKALATKDYLRVRVGVGRPPGRMDTADFVLKDFATTEKKDLPFLLDDAADAVETVVREGLAAAQQKYHTAVQ.

Tyrosine 17 contacts tRNA. Histidine 22 acts as the Proton acceptor in catalysis. Tyrosine 69, asparagine 71, and asparagine 117 together coordinate tRNA.

Belongs to the PTH family. As to quaternary structure, monomer.

The protein localises to the cytoplasm. The catalysed reaction is an N-acyl-L-alpha-aminoacyl-tRNA + H2O = an N-acyl-L-amino acid + a tRNA + H(+). Its function is as follows. Hydrolyzes ribosome-free peptidyl-tRNAs (with 1 or more amino acids incorporated), which drop off the ribosome during protein synthesis, or as a result of ribosome stalling. Functionally, catalyzes the release of premature peptidyl moieties from peptidyl-tRNA molecules trapped in stalled 50S ribosomal subunits, and thus maintains levels of free tRNAs and 50S ribosomes. The protein is Peptidyl-tRNA hydrolase of Arthrobacter sp. (strain FB24).